The chain runs to 194 residues: Holliday junction branch migration complex subunit RuvA (194 aa).

Residues 1 to 64 (MIGRLRGILA…EDSVSLYGFL (64 aa)) are domain I. The domain II stretch occupies residues 65-140 (REGERRLFRD…RAADFSSGAP (76 aa)). Positions 140 to 144 (PITGQ) are flexible linker. Residues 145–194 (LGPDAVSEATVALQQLGYKPAEAARMARDAGAEGDEVATVIRKALQAALR) form a domain III region.

Belongs to the RuvA family. In terms of assembly, homotetramer. Forms an RuvA(8)-RuvB(12)-Holliday junction (HJ) complex. HJ DNA is sandwiched between 2 RuvA tetramers; dsDNA enters through RuvA and exits via RuvB. An RuvB hexamer assembles on each DNA strand where it exits the tetramer. Each RuvB hexamer is contacted by two RuvA subunits (via domain III) on 2 adjacent RuvB subunits; this complex drives branch migration. In the full resolvosome a probable DNA-RuvA(4)-RuvB(12)-RuvC(2) complex forms which resolves the HJ.

It localises to the cytoplasm. The RuvA-RuvB-RuvC complex processes Holliday junction (HJ) DNA during genetic recombination and DNA repair, while the RuvA-RuvB complex plays an important role in the rescue of blocked DNA replication forks via replication fork reversal (RFR). RuvA specifically binds to HJ cruciform DNA, conferring on it an open structure. The RuvB hexamer acts as an ATP-dependent pump, pulling dsDNA into and through the RuvAB complex. HJ branch migration allows RuvC to scan DNA until it finds its consensus sequence, where it cleaves and resolves the cruciform DNA. In Xanthomonas axonopodis pv. citri (strain 306), this protein is Holliday junction branch migration complex subunit RuvA.